We begin with the raw amino-acid sequence, 308 residues long: ATP synthase gamma chain (308 aa).

The protein belongs to the ATPase gamma chain family. F-type ATPases have 2 components, CF(1) - the catalytic core - and CF(0) - the membrane proton channel. CF(1) has five subunits: alpha(3), beta(3), gamma(1), delta(1), epsilon(1). CF(0) has three main subunits: a, b and c.

It is found in the cell inner membrane. In terms of biological role, produces ATP from ADP in the presence of a proton gradient across the membrane. The gamma chain is believed to be important in regulating ATPase activity and the flow of protons through the CF(0) complex. The polypeptide is ATP synthase gamma chain (Bartonella tribocorum (strain CIP 105476 / IBS 506)).